A 503-amino-acid polypeptide reads, in one-letter code: Aspartyl/glutamyl-tRNA(Asn/Gln) amidotransferase subunit B (503 aa).

The protein belongs to the GatB/GatE family. GatB subfamily. As to quaternary structure, heterotrimer of A, B and C subunits.

It catalyses the reaction L-glutamyl-tRNA(Gln) + L-glutamine + ATP + H2O = L-glutaminyl-tRNA(Gln) + L-glutamate + ADP + phosphate + H(+). The enzyme catalyses L-aspartyl-tRNA(Asn) + L-glutamine + ATP + H2O = L-asparaginyl-tRNA(Asn) + L-glutamate + ADP + phosphate + 2 H(+). Allows the formation of correctly charged Asn-tRNA(Asn) or Gln-tRNA(Gln) through the transamidation of misacylated Asp-tRNA(Asn) or Glu-tRNA(Gln) in organisms which lack either or both of asparaginyl-tRNA or glutaminyl-tRNA synthetases. The reaction takes place in the presence of glutamine and ATP through an activated phospho-Asp-tRNA(Asn) or phospho-Glu-tRNA(Gln). The protein is Aspartyl/glutamyl-tRNA(Asn/Gln) amidotransferase subunit B of Ruegeria pomeroyi (strain ATCC 700808 / DSM 15171 / DSS-3) (Silicibacter pomeroyi).